The chain runs to 459 residues: Peptidyl-prolyl cis-trans isomerase FKBP4 (459 aa).

Met-1 carries the N-acetylmethionine; in peptidyl-prolyl cis-trans isomerase FKBP4; alternate modification. The interval 1–24 (MTAEEMKATESGAQSAPLPMEGVD) is disordered. N-acetylthreonine; in peptidyl-prolyl cis-trans isomerase FKBP4, N-terminally processed; partial is present on Thr-2. Residues 50 to 138 (GDRVFVHYTG…VFEVELFEFK (89 aa)) form the PPIase FKBP-type 1 domain. The residue at position 143 (Thr-143) is a Phosphothreonine; by CK2. In terms of domain architecture, PPIase FKBP-type 2 spans 167 to 253 (GAIVEVALEG…KYELHLKSFE (87 aa)). Position 220 is a phosphotyrosine (Tyr-220). Positions 267 to 400 (LEQSTIVKER…TQLAVCQQRI (134 aa)) are interaction with tubulin. TPR repeat units follow at residues 270 to 303 (STIV…LEYE), 319 to 352 (LASH…DSNN), and 353 to 386 (EKGL…YPNN). Lys-282 carries the N6-acetyllysine modification. Omega-N-methylarginine is present on Arg-373. The tract at residues 421–459 (EENKAKAEASSGDHPTDTEMKEEQKSNTAGSQSQVETEA) is disordered. A compositionally biased stretch (basic and acidic residues) spans 434-445 (HPTDTEMKEEQK). At Thr-436 the chain carries Phosphothreonine. Lys-441 participates in a covalent cross-link: Glycyl lysine isopeptide (Lys-Gly) (interchain with G-Cter in SUMO1). Polar residues predominate over residues 446-459 (SNTAGSQSQVETEA). Residues Ser-451 and Ser-453 each carry the phosphoserine modification.

Homodimer. Interacts with GLMN. Associates with HSP90AA1 and HSP70 in steroid hormone receptor complexes. Also interacts with peroxisomal phytanoyl-CoA alpha-hydroxylase (PHYH). Interacts with NR3C1 and dynein. Interacts with HSF1 in the HSP90 complex. Associates with tubulin. Interacts with MAPT/TAU. Interacts (via TPR domain) with S100A1, S100A2 and S100A6; the interaction is Ca(2+) dependent. Interaction with S100A1 and S100A2 (but not with S100A6) leads to inhibition of FKBP4-HSP90 interaction. Interacts with dynein; causes partially NR3C1 transport to the nucleus. Phosphorylation by CK2 results in loss of HSP90 binding activity. Widely expressed.

Its subcellular location is the cytoplasm. The protein localises to the cytosol. It localises to the mitochondrion. The protein resides in the nucleus. It is found in the cytoskeleton. Its subcellular location is the cell projection. The protein localises to the axon. It carries out the reaction [protein]-peptidylproline (omega=180) = [protein]-peptidylproline (omega=0). Its activity is regulated as follows. Inhibited by FK506. Its function is as follows. Immunophilin protein with PPIase and co-chaperone activities. Component of steroid receptors heterocomplexes through interaction with heat-shock protein 90 (HSP90). May play a role in the intracellular trafficking of heterooligomeric forms of steroid hormone receptors between cytoplasm and nuclear compartments. The isomerase activity controls neuronal growth cones via regulation of TRPC1 channel opening. Also acts as a regulator of microtubule dynamics by inhibiting MAPT/TAU ability to promote microtubule assembly. May have a protective role against oxidative stress in mitochondria. This is Peptidyl-prolyl cis-trans isomerase FKBP4 (FKBP4) from Homo sapiens (Human).